Reading from the N-terminus, the 204-residue chain is Transmembrane protein 186 (204 aa).

Topologically, residues 1-69 (MLELLCRVSP…RLVAALSRLK (69 aa)) are mitochondrial matrix. Residues 70–90 (VYQAVITAAGTPIVFALGSAG) traverse the membrane as a helical segment. Over 91 to 95 (QLSTD) the chain is Mitochondrial intermembrane. The chain crosses the membrane as a helical span at residues 96-116 (ALAIYAAIGVTGLITLTLASY). Topologically, residues 117–204 (ASSNLVGFIY…RQLFEGLFGN (88 aa)) are mitochondrial matrix.

This sequence belongs to the TMEM186 family. In terms of assembly, associates with mitochondrial complex I assembly intermediates during its biogenesis.

Its subcellular location is the mitochondrion inner membrane. Functionally, as part of the MCIA complex, required for efficient assembly of the mitochondrial complex I. The chain is Transmembrane protein 186 from Drosophila melanogaster (Fruit fly).